Here is a 633-residue protein sequence, read N- to C-terminus: tRNA uridine 5-carboxymethylaminomethyl modification enzyme MnmG (633 aa).

Residues 15 to 20, I127, and S182 contribute to the FAD site; that span reads GAGHAG. An NAD(+)-binding site is contributed by 276-290; sequence GPRYCPSIEDKIVRF. Q373 is a binding site for FAD.

It belongs to the MnmG family. As to quaternary structure, homodimer. Heterotetramer of two MnmE and two MnmG subunits. FAD serves as cofactor.

Its subcellular location is the cytoplasm. In terms of biological role, NAD-binding protein involved in the addition of a carboxymethylaminomethyl (cmnm) group at the wobble position (U34) of certain tRNAs, forming tRNA-cmnm(5)s(2)U34. This is tRNA uridine 5-carboxymethylaminomethyl modification enzyme MnmG from Streptococcus agalactiae serotype Ia (strain ATCC 27591 / A909 / CDC SS700).